The following is a 278-amino-acid chain: Endoplasmic reticulum junction formation protein lunapark (278 aa).

At 1 to 45 the chain is on the cytoplasmic side; it reads MFSALGKWVRGSRNDKDFVTKYTADLSQITSQIHQLDVALKKSQS. Residues 46–66 form a helical membrane-spanning segment; that stretch reads ILSQWQSNLTFYGIALTVLAL. Residues 67–77 lie on the Lumenal side of the membrane; that stretch reads SYTYWEYHGYR. The chain crosses the membrane as a helical span at residues 78-98; that stretch reads PYLVVTALLCIGSLILFKWAL. Topologically, residues 99 to 278 are cytoplasmic; it reads TKLYAFYNNN…PSQSEKEKTK (180 aa). The stretch at 107 to 183 forms a coiled coil; it reads NNRLRKLAKL…ELEKFKKESH (77 aa). Residues 223–247 form a C4-type; plays a role in ER morphology zinc finger; sequence CPQCHWKSNCYRLASKPIIFICPHC. The tract at residues 258-278 is disordered; sequence EDAIEAKQPAQPSQSEKEKTK.

It belongs to the lunapark family. Interacts with RTN1; this interaction is negatively regulated by SEY1. Interacts with SEY1 and YOP1.

Its subcellular location is the endoplasmic reticulum membrane. Functionally, plays a role in tubular endoplasmic reticulum network formation and maintenance. Works in conjunction with the ER shaping proteins (reticulons RTN1 and RTN2, YOP1), and in antagonism to SEY1 to maintain the network in a dynamic equilibrium. May counterbalance SEY1-directed polygon formation by promoting polygon loss through ring closure. The chain is Endoplasmic reticulum junction formation protein lunapark (LNP1) from Saccharomyces cerevisiae (strain ATCC 204508 / S288c) (Baker's yeast).